The sequence spans 330 residues: Serpentine receptor class J-38 (330 aa).

A run of 7 helical transmembrane segments spans residues 6 to 26 (IYIF…PIFV), 43 to 63 (LLLF…VVPI), 98 to 118 (LVAS…LVIY), 135 to 155 (LLLS…LGYA), 200 to 220 (TIIW…LALL), 253 to 273 (IPIV…IFGI), and 285 to 305 (GALG…LPIF).

The protein belongs to the nematode receptor-like protein srj family.

The protein localises to the membrane. The protein is Serpentine receptor class J-38 (srj-38) of Caenorhabditis elegans.